The sequence spans 206 residues: Na(+)-translocating NADH-quinone reductase subunit E (206 aa).

The next 6 helical transmembrane spans lie at 12-32 (AVFV…FIAI), 36-56 (IQTA…TVPV), 85-105 (FLGL…LEMT), 118-138 (GIFL…LFMV), 148-168 (VVYG…LAGI), and 184-204 (LGIT…FSGV).

Belongs to the NqrDE/RnfAE family. As to quaternary structure, composed of six subunits; NqrA, NqrB, NqrC, NqrD, NqrE and NqrF.

It localises to the cell inner membrane. It carries out the reaction a ubiquinone + n Na(+)(in) + NADH + H(+) = a ubiquinol + n Na(+)(out) + NAD(+). Functionally, NQR complex catalyzes the reduction of ubiquinone-1 to ubiquinol by two successive reactions, coupled with the transport of Na(+) ions from the cytoplasm to the periplasm. NqrA to NqrE are probably involved in the second step, the conversion of ubisemiquinone to ubiquinol. In Alcanivorax borkumensis (strain ATCC 700651 / DSM 11573 / NCIMB 13689 / SK2), this protein is Na(+)-translocating NADH-quinone reductase subunit E.